Here is a 593-residue protein sequence, read N- to C-terminus: Trehalose synthase/amylase TreS (593 aa).

Asp-90 contacts substrate. Residue Asn-132 coordinates Ca(2+). Positions 133 and 198 each coordinate substrate. Asp-200 is a binding site for Ca(2+). Position 228 (Arg-228) interacts with substrate. Catalysis depends on Asp-230, which acts as the Nucleophile. Ca(2+) contacts are provided by Tyr-234, Leu-235, and Glu-237. The Proton donor role is filled by Glu-272. The substrate site is built by His-341 and Asp-342.

It belongs to the glycosyl hydrolase 13 family. TreS subfamily. Homohexamer.

The catalysed reaction is D-maltose = alpha,alpha-trehalose. The enzyme catalyses Endohydrolysis of (1-&gt;4)-alpha-D-glucosidic linkages in polysaccharides containing three or more (1-&gt;4)-alpha-linked D-glucose units.. It functions in the pathway glycan biosynthesis; glycogen biosynthesis. The amylase activity is stimulated by addition of Ca(2+), but this cation and other divalent cations inhibit the trehalose synthase activity. In addition, trehalose synthase activity, but not amylase activity, is strongly inhibited, and in a competitive manner, by validoxylamine. On the other hand, amylase, but not trehalose synthase activity, is inhibited by the known transition-state amylase inhibitor, acarbose, suggesting the possibility of two different active sites. Other metal ions such as Mg(2+), Mn(2+), and Co(2+) are also somewhat effective in the stimulation of amylase activity, but Hg(2+), Cu(2+), Ni(2+) and Zn(2+) are inhibitory. Catalyzes the reversible interconversion of maltose and trehalose by transglucosylation. Maltose is the preferred substrate. To a lesser extent, also displays amylase activity, catalyzing the endohydrolysis of (1-&gt;4)-alpha-D-glucosidic linkages in glycogen and maltooligosaccharides such as maltoheptaose, to produce maltose which then can be converted to trehalose. TreS plays a key role in the utilization of trehalose for the production of glycogen and alpha-glucan via the TreS-Pep2 branch involved in the biosynthesis of maltose-1-phosphate (M1P). Might also function as a sensor and/or regulator of trehalose levels within the cell. Thus, when trehalose levels in the cell become dangerously low, TreS can expedite the conversion of glycogen to maltose via its amylase activity and then convert the maltose to trehalose; but this enzyme also can expedite or promote the conversion of trehalose to glycogen when cytoplasmic trehalose levels become too high. Is also able to catalyze the hydrolytic cleavage of alpha-aryl glucosides, as well as alpha-glucosyl fluoride in vitro. The protein is Trehalose synthase/amylase TreS of Mycolicibacterium smegmatis (strain ATCC 700084 / mc(2)155) (Mycobacterium smegmatis).